Reading from the N-terminus, the 475-residue chain is Adenylyl cyclase-associated protein 1 (475 aa).

Residue Ala2 is modified to N-acetylalanine. Tyr31 carries the post-translational modification Phosphotyrosine. At Ser34 the chain carries Phosphoserine. Lys81 carries the N6-acetyllysine modification. Disordered stretches follow at residues 216-255 (ELSG…ASRS) and 278-318 (MKTH…TKKE). Residues 218–228 (SGLPSGPSAGS) are compositionally biased toward low complexity. Positions 229-242 (GPPPPPPGPPPPPV) are enriched in pro residues. Over residues 243 to 255 (STSSGSDESASRS) the composition is skewed to low complexity. Residue Lys287 is modified to N6-methyllysine. Phosphoserine is present on residues Ser290, Ser295, and Ser301. The segment covering 300–312 (FSAPKPQTSPSPK) has biased composition (pro residues). The residue at position 307 (Thr307) is a Phosphothreonine. Phosphoserine occurs at positions 308 and 310. One can recognise a C-CAP/cofactor C-like domain in the interval 313–453 (PATKKEPAVL…EGGDFNEFPV (141 aa)). Residue Lys348 forms a Glycyl lysine isopeptide (Lys-Gly) (interchain with G-Cter in SUMO1) linkage.

The protein belongs to the CAP family. Homodimer. Binds actin monomers.

It is found in the cell membrane. Functionally, directly regulates filament dynamics and has been implicated in a number of complex developmental and morphological processes, including mRNA localization and the establishment of cell polarity. This Macaca fascicularis (Crab-eating macaque) protein is Adenylyl cyclase-associated protein 1 (CAP1).